A 146-amino-acid chain; its full sequence is 3-dehydroquinate dehydratase (146 aa).

Tyr-22 (proton acceptor) is an active-site residue. Substrate is bound by residues Asn-73, His-79, and Asp-86. His-99 serves as the catalytic Proton donor. Residues 100–101 and Arg-110 each bind substrate; that span reads LS.

Belongs to the type-II 3-dehydroquinase family. As to quaternary structure, homododecamer.

The catalysed reaction is 3-dehydroquinate = 3-dehydroshikimate + H2O. The protein operates within metabolic intermediate biosynthesis; chorismate biosynthesis; chorismate from D-erythrose 4-phosphate and phosphoenolpyruvate: step 3/7. Catalyzes a trans-dehydration via an enolate intermediate. The polypeptide is 3-dehydroquinate dehydratase (Synechococcus sp. (strain CC9605)).